The following is a 31-amino-acid chain: Cyclotide hyen-I (31 aa).

A cross-link (cyclopeptide (Gly-Asp)) is located at residues 1–31 (GSTPCGESCVWIPCISGIVGCSCSNKVCYMD). Cystine bridges form between Cys5/Cys21, Cys9/Cys23, and Cys14/Cys28.

Post-translationally, this is a cyclic peptide. As to expression, detected in seeds (at protein level).

Functionally, probably participates in a plant defense mechanism. In Pigea enneasperma (Spade flower), this protein is Cyclotide hyen-I.